Reading from the N-terminus, the 233-residue chain is 5'-methylthioadenosine/S-adenosylhomocysteine nucleosidase (233 aa).

The Proton acceptor role is filled by Glu12. Residues Gly78, Ile156, and 177-178 (ME) each bind substrate. Asp201 serves as the catalytic Proton donor.

This sequence belongs to the PNP/UDP phosphorylase family. MtnN subfamily.

The enzyme catalyses S-adenosyl-L-homocysteine + H2O = S-(5-deoxy-D-ribos-5-yl)-L-homocysteine + adenine. The catalysed reaction is S-methyl-5'-thioadenosine + H2O = 5-(methylsulfanyl)-D-ribose + adenine. It carries out the reaction 5'-deoxyadenosine + H2O = 5-deoxy-D-ribose + adenine. It participates in amino-acid biosynthesis; L-methionine biosynthesis via salvage pathway; S-methyl-5-thio-alpha-D-ribose 1-phosphate from S-methyl-5'-thioadenosine (hydrolase route): step 1/2. In terms of biological role, catalyzes the irreversible cleavage of the glycosidic bond in both 5'-methylthioadenosine (MTA) and S-adenosylhomocysteine (SAH/AdoHcy) to adenine and the corresponding thioribose, 5'-methylthioribose and S-ribosylhomocysteine, respectively. Also cleaves 5'-deoxyadenosine, a toxic by-product of radical S-adenosylmethionine (SAM) enzymes, into 5-deoxyribose and adenine. This is 5'-methylthioadenosine/S-adenosylhomocysteine nucleosidase from Listeria monocytogenes serotype 4b (strain CLIP80459).